Here is a 506-residue protein sequence, read N- to C-terminus: MRARCGRILSDSERVEADMDTGMGGMDFGTVDAVAGQVAGNLAVSEATIADLGYLRAQLAAAEVPFLLVRDRDHRLVLAADAAHRAMVRRVTAAAAAAGFVCTQPQPDVVRLGRDRDPAHHVELELWEYHGDTVECPRPNALTRTVFDLADVEFTEVRLFDRSWPTLAQMFAPQPTDVGFDIDIVFSWVDGSDPEFRARRAGMMAQVVVGEGDDADARIRQIDELKYALRSVHKNAPWIRRIFIATDSPAPAWLAEHPKVTIVRAIDHFSDTSGLPTFNSHAVESQLQHIEGLSEHFLYSNDDMFFARPVRPSMFFTPAGISRFIEADVRIGPGRNNERRSGYENAARVNRALLAERFGHVITRHLEHTPVPLRRSVLREMEEEFAADFARTRTSRFRAATDISVTNSLYHYYALLTGRAVPQEAARVAYVDTTSRAGLAVLDDIAAHRDLDFFCLNDGSFPEISESERVREVSRFLAGYFPDPAPWERVSAPSRRPLPESTAGAA.

The segment at 484-506 is disordered; that stretch reads PAPWERVSAPSRRPLPESTAGAA.

The protein belongs to the stealth family.

The chain is Exopolysaccharide phosphotransferase NFA_48680 from Nocardia farcinica (strain IFM 10152).